The following is a 291-amino-acid chain: Nucleotide-binding protein PPA0813 (291 aa).

ATP is bound at residue 17 to 24 (GISGAGRR). Residue 66-69 (DVRS) coordinates GTP.

It belongs to the RapZ-like family.

In terms of biological role, displays ATPase and GTPase activities. This is Nucleotide-binding protein PPA0813 from Cutibacterium acnes (strain DSM 16379 / KPA171202) (Propionibacterium acnes).